We begin with the raw amino-acid sequence, 946 residues long: Atos homolog protein A (946 aa).

The interval 24-32 is transactivation domain 1 (TAD1); that stretch reads ALLITEGRT. Basic and acidic residues predominate over residues 34–43; the sequence is EHSVKGRTEG. Disordered stretches follow at residues 34 to 58, 246 to 271, 484 to 524, and 547 to 567; these read EHSVKGRTEGPHCPPAQLSQPAPNK, SVTQPHNSQDNDQNSAPVSQHAFTKP, FQSS…TGNQ, and SCTDSFHKPQKDNPKICSQKV. Composition is skewed to polar residues over residues 247 to 267 and 484 to 500; these read VTQPHNSQDNDQNSAPVSQHA and FQSSGQSTVPSSNNENI. 2 stretches are compositionally biased toward basic and acidic residues: residues 503-517 and 547-560; these read LPEKRDIKQSEHGEI and SCTDSFHKPQKDNP. A required for macropage invasion region spans residues 749 to 806; sequence LLGNFEESVLNYRFEPLGVVEGFTAEVGASGIFCPTHMTLPVKVSFYSVSDDNAPSPY. Positions 833 to 841 are transactivation domain 2 (TAD2); that stretch reads FNPNKTVVK.

This sequence belongs to the ATOS family.

It localises to the nucleus. Its function is as follows. Transcription regulator that syncronizes transcriptional and translational programs to promote macrophage invasion of tissues. The polypeptide is Atos homolog protein A (atosa) (Xenopus tropicalis (Western clawed frog)).